Reading from the N-terminus, the 602-residue chain is MEDDIWKAVDLSGVFDEDSVELRPRLTSVSSPSLSSTPPPSPLSSPSWSEEELPAPRSDGSPASSISAHKSYPKIFQTFKKDLSEVTVDRLMYPSFYERVQISIQTEDQSWLQRISARKRIKRIPSIEITEAPQENLASKLRENWVINPEEPKLSILCEMEFNEDFVNFFETSLRTLPSIGPPTILSYRKEYSCMDVILKDEQELGATCEFCGSDLQSLFFNMDTSLDDAGTKGKSHRSCCLQFQNLLDYITEERLTTKSPEMELISISPHAAHGSDADRLKAKEKAMQRKQERQMARHFTIIPEQSPVGTEEDTKHLKTISYQLSGDYLQNVRTEEVDLQITNISITCCDSWKICGKVMGNELLEKDYKHGSKFLTSFPDGTIQIFYPSGNLAIIRVPNKTDGFICIIQEDTATSPAILALFDSSGRSSCYHPNGNVWVYINILGGQYSDQAGNRIRTWNWSSTKPTPAFVSFKPVLLALNRYIGIRILEQDKVSIHFLAMGQQATICLGTKVVLQDPEEVPTLRFLSGDDLLLLASLIKIRRLFSKMEGCVNFPVSKAWERLKQPSYLSSLSLKLLALCQNSGIQQNIMETITELIKENE.

The disordered stretch occupies residues 22–67; it reads LRPRLTSVSSPSLSSTPPPSPLSSPSWSEEELPAPRSDGSPASSIS. The span at 25–36 shows a compositional bias: low complexity; that stretch reads RLTSVSSPSLSS.

The protein belongs to the ERICH6 family.

It localises to the nucleus. The chain is Glutamate-rich protein 6 (Erich6) from Rattus norvegicus (Rat).